We begin with the raw amino-acid sequence, 504 residues long: Biotinidase (504 aa).

The first 20 residues, 1 to 20, serve as a signal peptide directing secretion; sequence MFSFGTVFTFALLLIPLTEA. In terms of domain architecture, CN hydrolase spans 30–309; sequence YEHNLILNPD…GRLLVARVPV (280 aa). Glu79 functions as the Proton acceptor in the catalytic mechanism. 2 N-linked (GlcNAc...) asparagine glycosylation sites follow: Asn86 and Asn117. Residue Lys181 is the Proton donor of the active site. Catalysis depends on Cys214, which acts as the Nucleophile. Residues Asn261, Asn365, and Asn375 are each glycosylated (N-linked (GlcNAc...) asparagine).

Belongs to the carbon-nitrogen hydrolase superfamily. BTD/VNN family.

It localises to the secreted. It is found in the extracellular space. The enzyme catalyses biocytin + H2O = biotin + L-lysine. It carries out the reaction biotin amide + H2O = biotin + NH4(+). Its function is as follows. Catalytic release of biotin from biocytin, the product of biotin-dependent carboxylases degradation. The polypeptide is Biotinidase (btd) (Takifugu rubripes (Japanese pufferfish)).